The sequence spans 420 residues: Cytochrome c biogenesis protein Ccs1 (420 aa).

The next 3 membrane-spanning stretches (helical) occupy residues 12–32 (LRFS…GTVI), 71–91 (TWWF…CTFL), and 157–177 (IAPI…IVGS).

It belongs to the Ccs1/CcsB family. As to quaternary structure, may interact with CcsA.

It is found in the plastid. The protein localises to the chloroplast thylakoid membrane. Required during biogenesis of c-type cytochromes (cytochrome c6 and cytochrome f) at the step of heme attachment. The sequence is that of Cytochrome c biogenesis protein Ccs1 from Phaeodactylum tricornutum (strain CCAP 1055/1).